Reading from the N-terminus, the 599-residue chain is Replication protein E1 (599 aa).

Residues 78–80 (KRK) carry the Nuclear localization signal motif. Residues Ser84 and Ser93 each carry the phosphoserine; by host modification. The Nuclear export signal motif lies at 92–101 (LSPQLQAVKI). Residues 124–140 (NSLTQVESESQAGPSSQ) show a composition bias toward polar residues. Positions 124–144 (NSLTQVESESQAGPSSQDGGG) are disordered. The segment at 139–303 (SQDGGGDINL…LVSHQAATTA (165 aa)) is DNA-binding region. The 151-residue stretch at 402–552 (VNILSFLIVL…MPILDDGSPM (151 aa)) folds into the SF3 helicase domain. 428–435 (GPPDTGKS) is a binding site for ATP. Residue Lys509 forms a Glycyl lysine isopeptide (Lys-Gly) (interchain with G-Cter in SUMO) linkage. Residues 575–599 (DPEEENNGVPSRTFRCTSRSNSDSY) form a disordered region. Polar residues predominate over residues 582 to 599 (GVPSRTFRCTSRSNSDSY).

This sequence belongs to the papillomaviridae E1 protein family. Can form hexamers. Interacts with E2 protein; this interaction increases E1 DNA binding specificity. Interacts with host DNA polymerase subunit POLA2. Interacts with host single stranded DNA-binding protein RPA1. Interacts with host TOP1; this interaction stimulates the enzymatic activity of TOP1. Phosphorylated. Post-translationally, sumoylated.

Its subcellular location is the host nucleus. The catalysed reaction is Couples ATP hydrolysis with the unwinding of duplex DNA by translocating in the 3'-5' direction.. The enzyme catalyses ATP + H2O = ADP + phosphate + H(+). Its function is as follows. ATP-dependent DNA 3'-5' helicase required for initiation of viral DNA replication. It forms a complex with the viral E2 protein. The E1-E2 complex binds to the replication origin which contains binding sites for both proteins. During the initial step, a dimer of E1 interacts with a dimer of protein E2 leading to a complex that binds the viral origin of replication with high specificity. Then, a second dimer of E1 displaces the E2 dimer in an ATP-dependent manner to form the E1 tetramer. Following this, two E1 monomers are added to each half of the site, which results in the formation of two E1 trimers on the viral ori. Subsequently, two hexamers will be created. The double hexamer acts as a bi-directional helicase machinery and unwinds the viral DNA and then recruits the host DNA polymerase to start replication. In Homo sapiens (Human), this protein is Replication protein E1.